Consider the following 491-residue polypeptide: Anthranilate synthase component 1 (491 aa).

L-tryptophan-binding positions include serine 49 and 271 to 273 (PYL). Residue 306 to 307 (GT) coordinates chorismate. Mg(2+) is bound at residue glutamate 333. Chorismate is bound by residues tyrosine 421, arginine 441, 455–457 (GAG), and glycine 457. Glutamate 470 contributes to the Mg(2+) binding site.

Belongs to the anthranilate synthase component I family. Heterotetramer consisting of two non-identical subunits: a beta subunit (TrpG) and a large alpha subunit (TrpE). Mg(2+) serves as cofactor.

The enzyme catalyses chorismate + L-glutamine = anthranilate + pyruvate + L-glutamate + H(+). It functions in the pathway amino-acid biosynthesis; L-tryptophan biosynthesis; L-tryptophan from chorismate: step 1/5. With respect to regulation, feedback inhibited by tryptophan. In terms of biological role, part of a heterotetrameric complex that catalyzes the two-step biosynthesis of anthranilate, an intermediate in the biosynthesis of L-tryptophan. In the first step, the glutamine-binding beta subunit (TrpG) of anthranilate synthase (AS) provides the glutamine amidotransferase activity which generates ammonia as a substrate that, along with chorismate, is used in the second step, catalyzed by the large alpha subunit of AS (TrpE) to produce anthranilate. In the absence of TrpG, TrpE can synthesize anthranilate directly from chorismate and high concentrations of ammonia. This Neisseria meningitidis serogroup C / serotype 2a (strain ATCC 700532 / DSM 15464 / FAM18) protein is Anthranilate synthase component 1 (trpE).